The primary structure comprises 284 residues: RAD52 motif-containing protein 1 (284 aa).

The interval 1–92 is necessary for nuclear localization and for nucleolar accumulation in response to heat shock; sequence MAELVPFAVP…KQLFQKSPVK (92 aa). Residues 15–98 enclose the RRM domain; that stretch reads KTLLVWELSS…SPVKVRLGTR (84 aa). The interval 90–133 is necessary for nuclear and nucleolar localization; that stretch reads PVKVRLGTRHKAVQHQALALNSSKCQELANYYFGFNGCSKRIIK.

As to quaternary structure, homodimer. Expressed in testis.

It is found in the nucleus. It localises to the cytoplasm. The protein resides in the nucleolus. Its subcellular location is the PML body. The protein localises to the cajal body. Its function is as follows. May confer resistance to the antitumor agent cisplatin. Binds to DNA and RNA. The protein is RAD52 motif-containing protein 1 (RDM1) of Homo sapiens (Human).